The sequence spans 142 residues: ATP synthase epsilon chain (142 aa).

This sequence belongs to the ATPase epsilon chain family. In terms of assembly, F-type ATPases have 2 components, CF(1) - the catalytic core - and CF(0) - the membrane proton channel. CF(1) has five subunits: alpha(3), beta(3), gamma(1), delta(1), epsilon(1). CF(0) has three main subunits: a, b and c.

The protein resides in the cell inner membrane. Functionally, produces ATP from ADP in the presence of a proton gradient across the membrane. This Haemophilus influenzae (strain 86-028NP) protein is ATP synthase epsilon chain.